The primary structure comprises 1482 residues: Chromosome partition protein MukB (1482 aa).

34–41 serves as a coordination point for ATP; sequence GGNGAGKS. Coiled-coil stretches lie at residues 337–468, 509–604, 780–805, 835–1044, 1070–1115, and 1210–1265; these read LNLV…LSVA, QHLA…APIW, RAARENRLEILHAEREKLAERYATLS, EAEI…ELVD, TNRA…TAKA, and EAIE…LQAV. The tract at residues 666 to 783 is flexible hinge; sequence PGGAEDQRLV…AVPLFGRAAR (118 aa).

The protein belongs to the SMC family. MukB subfamily. Homodimerization via its hinge domain. Binds to DNA via its C-terminal region. Interacts, and probably forms a ternary complex, with MukE and MukF via its C-terminal region. The complex formation is stimulated by calcium or magnesium. Interacts with tubulin-related protein FtsZ.

The protein resides in the cytoplasm. The protein localises to the nucleoid. Its function is as follows. Plays a central role in chromosome condensation, segregation and cell cycle progression. Functions as a homodimer, which is essential for chromosome partition. Involved in negative DNA supercoiling in vivo, and by this means organize and compact chromosomes. May achieve or facilitate chromosome segregation by condensation DNA from both sides of a centrally located replisome during cell division. This Serratia proteamaculans (strain 568) protein is Chromosome partition protein MukB.